The primary structure comprises 500 residues: Cobyric acid synthase (500 aa).

One can recognise a GATase cobBQ-type domain in the interval 253 to 446 (KIGVAAIYFP…FHGFFDRPEV (194 aa)). Residue Cys-334 is the Nucleophile of the active site. His-438 is an active-site residue.

It belongs to the CobB/CobQ family. CobQ subfamily.

It functions in the pathway cofactor biosynthesis; adenosylcobalamin biosynthesis. Catalyzes amidations at positions B, D, E, and G on adenosylcobyrinic A,C-diamide. NH(2) groups are provided by glutamine, and one molecule of ATP is hydrogenolyzed for each amidation. The protein is Cobyric acid synthase of Chlorobaculum tepidum (strain ATCC 49652 / DSM 12025 / NBRC 103806 / TLS) (Chlorobium tepidum).